Consider the following 711-residue polypeptide: Arginine decarboxylase 2 (711 aa).

At lysine 147 the chain carries N6-(pyridoxal phosphate)lysine. 331–341 (IDIGGGLGIDY) lines the substrate pocket. Residues 642–661 (MHTKGGSEGENEEEEEDDEF) form a disordered region. The segment covering 650-661 (GENEEEEEDDEF) has biased composition (acidic residues).

Belongs to the Orn/Lys/Arg decarboxylase class-II family. SpeA subfamily. In terms of assembly, homodimer and heterodimer with ADC1. Pyridoxal 5'-phosphate serves as cofactor. Requires Mg(2+) as cofactor.

The protein resides in the plastid. It localises to the chloroplast. It is found in the cytoplasm. Its subcellular location is the cytosol. The enzyme catalyses L-arginine + H(+) = agmatine + CO2. It functions in the pathway amine and polyamine biosynthesis; agmatine biosynthesis; agmatine from L-arginine: step 1/1. Required for the biosynthesis of putrescine. Catalyzes the first step of polyamine (PA) biosynthesis to produce putrescine from arginine. Is a major contributor to basal arginine decarboxylase (ADC) activity and putrescine biosynthesis. Accumulation of putrescine plays a positive role in salt stress tolerance. Accumulation of putrescine plays a positive role in freezing tolerance. Production of PA is essential for normal seed development. Controls PA homeostasis which is crucial for normal plant growth and development. This Arabidopsis thaliana (Mouse-ear cress) protein is Arginine decarboxylase 2.